The chain runs to 354 residues: Protein-arginine kinase (354 aa).

The Phosphagen kinase C-terminal domain occupies 24-254 (IVLSSRIRLA…QQIIQQEKMA (231 aa)). ATP is bound by residues 27–31 (SSRIR), histidine 92, arginine 125, 176–180 (RASVM), and 207–212 (RGIYGE). An RDXXRA motif of the pArg binding pocket involved in allosteric regulation motif is present at residues 337–342 (RDYRRA).

This sequence belongs to the ATP:guanido phosphotransferase family.

The enzyme catalyses L-arginyl-[protein] + ATP = N(omega)-phospho-L-arginyl-[protein] + ADP + H(+). Appears to be allosterically activated by the binding of pArg-containing polypeptides to the pArg-binding pocket localized in the C-terminal domain of McsB. In terms of biological role, catalyzes the specific phosphorylation of arginine residues in a large number of proteins. Is part of the bacterial stress response system. Protein arginine phosphorylation has a physiologically important role and is involved in the regulation of many critical cellular processes, such as protein homeostasis, motility, competence, and stringent and stress responses, by regulating gene expression and protein activity. The sequence is that of Protein-arginine kinase from Bacillus cereus (strain ATCC 10987 / NRS 248).